The sequence spans 842 residues: ATP-binding cassette sub-family B member 6 (842 aa).

Residues Met-1–Cys-26 are Lumenal-facing. The tract at residues Met-1–Trp-205 is required for the lysosomal targeting. The segment at Met-1–Gln-236 is required for ATPase activity. The N-linked (GlcNAc...) asparagine glycan is linked to Asn-6. An intrachain disulfide couples Cys-8 to Cys-26. The helical transmembrane segment at Phe-27–Ala-47 threads the bilayer. Topologically, residues Leu-48–Pro-72 are cytoplasmic. A helical transmembrane segment spans residues Tyr-73 to Gly-93. The Lumenal segment spans residues Arg-94–Tyr-106. A helical transmembrane segment spans residues Leu-107 to Val-127. Topologically, residues Glu-128–Ser-147 are cytoplasmic. Residues Pro-148–Trp-168 traverse the membrane as a helical segment. Residues Asn-169–Gln-185 lie on the Lumenal side of the membrane. A helical membrane pass occupies residues Phe-186–Ala-206. Topologically, residues Pro-207–Leu-263 are cytoplasmic. The helical transmembrane segment at Val-264–Ile-284 threads the bilayer. The ABC transmembrane type-1 domain maps to Val-265–Thr-556. The Lumenal portion of the chain corresponds to Phe-285 to Asn-291. A helical membrane pass occupies residues Leu-292–Leu-312. Over Lys-313–Arg-375 the chain is Cytoplasmic. A helical transmembrane segment spans residues Gly-376 to Ala-396. A topological domain (lumenal) is located at residue Asp-397. Residues Ile-398–Phe-418 traverse the membrane as a helical segment. Residues Leu-419–Gln-499 lie on the Cytoplasmic side of the membrane. A helical membrane pass occupies residues Thr-500 to Val-520. The Lumenal segment spans residues Thr-521–Asp-529. The chain crosses the membrane as a helical span at residues Tyr-530–Tyr-550. Topologically, residues Tyr-551–Arg-842 are cytoplasmic. One can recognise an ABC transporter domain in the interval Ile-590–Leu-824. Residues Tyr-599 and Gly-623–Arg-634 contribute to the ATP site.

This sequence belongs to the ABC transporter superfamily. ABCB family. Heavy Metal importer (TC 3.A.1.210) subfamily. As to quaternary structure, homodimer. In terms of processing, N-glycosylated. Widely expressed. High expression is detected in the retinal epithelium. Expressed in mature erythrocytes.

The protein localises to the cell membrane. The protein resides in the mitochondrion outer membrane. Its subcellular location is the endoplasmic reticulum membrane. It localises to the golgi apparatus membrane. It is found in the endosome membrane. The protein localises to the lysosome membrane. The protein resides in the late endosome membrane. Its subcellular location is the early endosome membrane. It localises to the secreted. It is found in the extracellular exosome. The protein localises to the mitochondrion. The protein resides in the endosome. Its subcellular location is the multivesicular body membrane. It localises to the melanosome membrane. The catalysed reaction is heme b(in) + ATP + H2O = heme b(out) + ADP + phosphate + H(+). It catalyses the reaction coproporphyrin III(in) + ATP + H2O = coproporphyrin III(out) + ADP + phosphate + H(+). The enzyme catalyses pheophorbide a(in) + ATP + H2O = pheophorbide a(out) + ADP + phosphate + H(+). It carries out the reaction coproporphyrinogen III(in) + ATP + H2O = coproporphyrinogen III(out) + ADP + phosphate + H(+). The catalysed reaction is protoporphyrin IX(in) + ATP + H2O = protoporphyrin IX(out) + ADP + phosphate + H(+). It catalyses the reaction coproporphyrin I(in) + ATP + H2O = coproporphyrin I(out) + ADP + phosphate + H(+). The enzyme catalyses uroporphyrin I(in) + ATP + H2O = uroporphyrin I(out) + ADP + phosphate + H(+). It carries out the reaction uroporphyrin III(in) + ATP + H2O = uroporphyrin III(out) + ADP + phosphate + H(+). Its activity is regulated as follows. ATPase activity is inhibited by MgATP with an IC(50) of 1.03 mM and up-regulated by coporphyrin III&gt; hemin &gt; protoporphyrin IX. ATPase activity for hemin is up-regulated by glutathione. The ATPase activity is impaired by increasing copper concentrations (0-300 uM). The ATPase activity is stimulated in presence of glutathione for increasing copper concentrations (0-300 uM). Functionally, ATP-dependent transporter that catalyzes the transport of a broad-spectrum of porphyrins from the cytoplasm to the extracellular space through the plasma membrane or into the vesicle lumen. May also function as an ATP-dependent importer of porphyrins from the cytoplasm into the mitochondria, in turn may participate in the de novo heme biosynthesis regulation and in the coordination of heme and iron homeostasis during phenylhydrazine stress. May also play a key role in the early steps of melanogenesis producing PMEL amyloid fibrils. In vitro, it confers to cells a resistance to toxic metal such as arsenic and cadmium and against chemotherapeutics agent such as 5-fluorouracil, SN-38 and vincristin. In addition may play a role in the transition metal homeostasis. In Homo sapiens (Human), this protein is ATP-binding cassette sub-family B member 6.